The chain runs to 302 residues: Phosphoribosylaminoimidazole-succinocarboxamide synthase (302 aa).

The protein belongs to the SAICAR synthetase family.

The catalysed reaction is 5-amino-1-(5-phospho-D-ribosyl)imidazole-4-carboxylate + L-aspartate + ATP = (2S)-2-[5-amino-1-(5-phospho-beta-D-ribosyl)imidazole-4-carboxamido]succinate + ADP + phosphate + 2 H(+). It participates in purine metabolism; IMP biosynthesis via de novo pathway; 5-amino-1-(5-phospho-D-ribosyl)imidazole-4-carboxamide from 5-amino-1-(5-phospho-D-ribosyl)imidazole-4-carboxylate: step 1/2. The chain is Phosphoribosylaminoimidazole-succinocarboxamide synthase from Cupriavidus metallidurans (strain ATCC 43123 / DSM 2839 / NBRC 102507 / CH34) (Ralstonia metallidurans).